Consider the following 191-residue polypeptide: dCTP deaminase, dUMP-forming (191 aa).

DCTP is bound by residues 101–106, Asp119, 127–129, Gln148, Tyr162, and Gln174; these read KSSLGR and TLE. The Proton donor/acceptor role is filled by Glu129. A disordered region spans residues 169-191; it reads NRYQGQRGPTASRSHLNFHRTRI. Residues 171 to 183 show a composition bias toward polar residues; the sequence is YQGQRGPTASRSH.

It belongs to the dCTP deaminase family. Homotrimer.

The catalysed reaction is dCTP + 2 H2O = dUMP + NH4(+) + diphosphate. It functions in the pathway pyrimidine metabolism; dUMP biosynthesis; dUMP from dCTP: step 1/1. Bifunctional enzyme that catalyzes both the deamination of dCTP to dUTP and the hydrolysis of dUTP to dUMP without releasing the toxic dUTP intermediate. This chain is dCTP deaminase, dUMP-forming, found in Pseudarthrobacter chlorophenolicus (strain ATCC 700700 / DSM 12829 / CIP 107037 / JCM 12360 / KCTC 9906 / NCIMB 13794 / A6) (Arthrobacter chlorophenolicus).